The chain runs to 261 residues: Glutathione S-transferase theta-1 (261 aa).

Residues 2–101 (GLELYLDLLS…YLSRKYNTPD (100 aa)) form the GST N-terminal domain. Glutathione is bound by residues 72-73 (KV) and 85-86 (EC). Positions 107–248 (DIKKRAQVDE…LSNIQIDPQL (142 aa)) constitute a GST C-terminal domain.

Belongs to the GST superfamily. Theta family. As to quaternary structure, homodimer.

The protein resides in the cytoplasm. It carries out the reaction RX + glutathione = an S-substituted glutathione + a halide anion + H(+). Its function is as follows. Conjugation of reduced glutathione to a wide number of exogenous and endogenous hydrophobic electrophiles. The chain is Glutathione S-transferase theta-1 (GSTT1) from Gallus gallus (Chicken).